Consider the following 145-residue polypeptide: MNKMERQQQIKRIIQAEHIGTQEDIKNHLQKEGIVVTQATLSRDLRAIGLLKLRDEQGKLYYSLSEPVATPFSPEVRFYVLKVDRAGFMLVLHTNLGEADVLANLIDNDAIEDILGTIAGADTLLVICRDEEIAKRFEKDLAAGL.

This sequence belongs to the ArgR family.

The protein resides in the cytoplasm. It participates in amino-acid biosynthesis; L-arginine biosynthesis [regulation]. Its function is as follows. Regulates arginine biosynthesis genes. The protein is Arginine repressor of Streptococcus pyogenes serotype M3 (strain ATCC BAA-595 / MGAS315).